The primary structure comprises 254 residues: Alcohol dehydrogenase 1 (254 aa).

Residue 10-33 participates in NAD(+) binding; that stretch reads FVAGLGGIGLDTSREIVKSGPKNL. Residue Ser138 coordinates substrate. The Proton acceptor role is filled by Tyr151.

Belongs to the short-chain dehydrogenases/reductases (SDR) family. As to quaternary structure, homodimer.

It carries out the reaction a primary alcohol + NAD(+) = an aldehyde + NADH + H(+). The catalysed reaction is a secondary alcohol + NAD(+) = a ketone + NADH + H(+). This chain is Alcohol dehydrogenase 1 (Adh1), found in Drosophila hydei (Fruit fly).